A 300-amino-acid chain; its full sequence is GTPase Era (300 aa).

Positions 8–176 constitute an Era-type G domain; the sequence is RCGYVAIVGR…EKVIADHLPE (169 aa). The segment at 16–23 is G1; it reads GRPNVGKS. Residue 16–23 participates in GTP binding; that stretch reads GRPNVGKS. Residues 42 to 46 are G2; it reads QTTRH. The tract at residues 63-66 is G3; the sequence is DTPG. Residues 63-67 and 125-128 contribute to the GTP site; these read DTPGM and NKTD. The tract at residues 125-128 is G4; it reads NKTD. Residues 155–157 are G5; the sequence is ISA. The 85-residue stretch at 199-283 folds into the KH type-2 domain; sequence VREKIMRQLG…MLNLWVKVKG (85 aa).

This sequence belongs to the TRAFAC class TrmE-Era-EngA-EngB-Septin-like GTPase superfamily. Era GTPase family. In terms of assembly, monomer.

The protein localises to the cytoplasm. Its subcellular location is the cell inner membrane. Its function is as follows. An essential GTPase that binds both GDP and GTP, with rapid nucleotide exchange. Plays a role in 16S rRNA processing and 30S ribosomal subunit biogenesis and possibly also in cell cycle regulation and energy metabolism. The protein is GTPase Era of Pseudomonas fluorescens (strain Pf0-1).